We begin with the raw amino-acid sequence, 489 residues long: Protein nucleotidyltransferase YdiU (489 aa).

The ATP site is built by Gly-88, Gly-90, Arg-91, Lys-111, Asp-123, Gly-124, Arg-174, and Arg-181. Asp-250 (proton acceptor) is an active-site residue. Positions 251 and 260 each coordinate Mg(2+). Asp-260 is an ATP binding site.

Belongs to the SELO family. The cofactor is Mg(2+). Requires Mn(2+) as cofactor.

The enzyme catalyses L-seryl-[protein] + ATP = 3-O-(5'-adenylyl)-L-seryl-[protein] + diphosphate. The catalysed reaction is L-threonyl-[protein] + ATP = 3-O-(5'-adenylyl)-L-threonyl-[protein] + diphosphate. It catalyses the reaction L-tyrosyl-[protein] + ATP = O-(5'-adenylyl)-L-tyrosyl-[protein] + diphosphate. It carries out the reaction L-histidyl-[protein] + UTP = N(tele)-(5'-uridylyl)-L-histidyl-[protein] + diphosphate. The enzyme catalyses L-seryl-[protein] + UTP = O-(5'-uridylyl)-L-seryl-[protein] + diphosphate. The catalysed reaction is L-tyrosyl-[protein] + UTP = O-(5'-uridylyl)-L-tyrosyl-[protein] + diphosphate. In terms of biological role, nucleotidyltransferase involved in the post-translational modification of proteins. It can catalyze the addition of adenosine monophosphate (AMP) or uridine monophosphate (UMP) to a protein, resulting in modifications known as AMPylation and UMPylation. This is Protein nucleotidyltransferase YdiU from Vibrio cholerae serotype O1 (strain ATCC 39315 / El Tor Inaba N16961).